The sequence spans 126 residues: Glycine cleavage system H protein (126 aa).

One can recognise a Lipoyl-binding domain in the interval 21–103; it reads TVTVGISDHA…YESGWIARIK (83 aa). Lys62 carries the N6-lipoyllysine modification.

The protein belongs to the GcvH family. In terms of assembly, the glycine cleavage system is composed of four proteins: P, T, L and H. (R)-lipoate serves as cofactor.

In terms of biological role, the glycine cleavage system catalyzes the degradation of glycine. The H protein shuttles the methylamine group of glycine from the P protein to the T protein. The protein is Glycine cleavage system H protein of Aliivibrio fischeri (strain MJ11) (Vibrio fischeri).